Here is a 235-residue protein sequence, read N- to C-terminus: Purine nucleoside phosphorylase DeoD-type (235 aa).

His-4 contributes to the a purine D-ribonucleoside binding site. Residues Gly-20, Arg-24, Arg-43, and 87 to 90 (RVGT) contribute to the phosphate site. Residues 178–180 (EME) and 202–203 (SD) contribute to the a purine D-ribonucleoside site. Asp-203 (proton donor) is an active-site residue.

The protein belongs to the PNP/UDP phosphorylase family. In terms of assembly, homohexamer; trimer of homodimers.

The enzyme catalyses a purine D-ribonucleoside + phosphate = a purine nucleobase + alpha-D-ribose 1-phosphate. It catalyses the reaction a purine 2'-deoxy-D-ribonucleoside + phosphate = a purine nucleobase + 2-deoxy-alpha-D-ribose 1-phosphate. Its function is as follows. Catalyzes the reversible phosphorolytic breakdown of the N-glycosidic bond in the beta-(deoxy)ribonucleoside molecules, with the formation of the corresponding free purine bases and pentose-1-phosphate. The chain is Purine nucleoside phosphorylase DeoD-type from Geobacillus sp. (strain WCH70).